Here is a 307-residue protein sequence, read N- to C-terminus: UDP-3-O-acyl-N-acetylglucosamine deacetylase (307 aa).

Zn(2+) is bound by residues His78, His241, and Asp245. The active-site Proton donor is His268.

Belongs to the LpxC family. Zn(2+) serves as cofactor.

The enzyme catalyses a UDP-3-O-[(3R)-3-hydroxyacyl]-N-acetyl-alpha-D-glucosamine + H2O = a UDP-3-O-[(3R)-3-hydroxyacyl]-alpha-D-glucosamine + acetate. It participates in glycolipid biosynthesis; lipid IV(A) biosynthesis; lipid IV(A) from (3R)-3-hydroxytetradecanoyl-[acyl-carrier-protein] and UDP-N-acetyl-alpha-D-glucosamine: step 2/6. Catalyzes the hydrolysis of UDP-3-O-myristoyl-N-acetylglucosamine to form UDP-3-O-myristoylglucosamine and acetate, the committed step in lipid A biosynthesis. This chain is UDP-3-O-acyl-N-acetylglucosamine deacetylase, found in Polaromonas naphthalenivorans (strain CJ2).